The primary structure comprises 148 residues: Large ribosomal subunit protein bL28c (148 aa).

The N-terminal 71 residues, 1 to 71 (MAASGMLISN…PLKPSLQPVA (71 aa)), are a transit peptide targeting the chloroplast.

In terms of assembly, component of the chloroplast large ribosomal subunit (LSU). Mature 70S chloroplast ribosomes of higher plants consist of a small (30S) and a large (50S) subunit. The 30S small subunit contains 1 molecule of ribosomal RNA (16S rRNA) and 24 different proteins. The 50S large subunit contains 3 rRNA molecules (23S, 5S and 4.5S rRNA) and 33 different proteins.

The protein resides in the plastid. Its subcellular location is the chloroplast. Its function is as follows. Component of the chloroplast ribosome (chloro-ribosome), a dedicated translation machinery responsible for the synthesis of chloroplast genome-encoded proteins, including proteins of the transcription and translation machinery and components of the photosynthetic apparatus. The chain is Large ribosomal subunit protein bL28c (RPL28) from Spinacia oleracea (Spinach).